Consider the following 313-residue polypeptide: Ribosomal RNA small subunit methyltransferase H (313 aa).

S-adenosyl-L-methionine contacts are provided by residues 35-37, Asp55, Phe79, Asp101, and Gln108; that span reads GGH.

It belongs to the methyltransferase superfamily. RsmH family.

It is found in the cytoplasm. The enzyme catalyses cytidine(1402) in 16S rRNA + S-adenosyl-L-methionine = N(4)-methylcytidine(1402) in 16S rRNA + S-adenosyl-L-homocysteine + H(+). Its function is as follows. Specifically methylates the N4 position of cytidine in position 1402 (C1402) of 16S rRNA. This Shigella sonnei (strain Ss046) protein is Ribosomal RNA small subunit methyltransferase H.